Here is a 228-residue protein sequence, read N- to C-terminus: Secreted LysM effector ECP6 (228 aa).

The first 18 residues, 1–18 (MQSMILFAAALMGAAVNG), serve as a signal peptide directing secretion. Cystine bridges form between Cys-36–Cys-90, Cys-64–Cys-98, Cys-109–Cys-163, and Cys-168–Cys-220. In terms of domain architecture, LysM 1 spans 42–86 (IKYTVVKGDTLTSIAKKFKSGICNIVSVNKLANPNLIELGATLII). Thr-51, Thr-53, Asn-76, and Ile-78 together coordinate chitin. N-linked (GlcNAc...) asparagine glycosylation is found at Asn-89, Asn-95, Asn-127, and Asn-133. LysM domains lie at 115–160 (GSYT…IITV) and 172–216 (GTYN…QIIL). Positions 179, 181, 183, 205, 206, and 208 each coordinate chitin. N-linked (GlcNAc...) asparagine glycosylation occurs at Asn-222.

It belongs to the secreted LysM effector family. As to quaternary structure, forms homodimers.

The protein localises to the secreted. In terms of biological role, secreted effector that enables the plant pathogenic fungus to manipulate host defenses for successful infection. Binds chitine, but not to any other glycan, including the N-linked glycan chitobiose. Outcompetes host immune receptor for chitin binding through intrachain LysM dimerization. During infection, sequesters chitin oligosaccharides that are released from the cell walls of invading hyphae to prevent elicitation of host immunity. This Passalora fulva (Tomato leaf mold) protein is Secreted LysM effector ECP6.